Consider the following 209-residue polypeptide: Transcription factor 23 (209 aa).

Disordered regions lie at residues 1-20 (MSQE…GHNK) and 54-85 (LSRA…ARER). The span at 72–85 (GRSEASPENAARER) shows a compositional bias: basic and acidic residues. The 53-residue stretch at 75 to 127 (EASPENAARERTRVKTLRQAFLALQAALPAVPPDTKLSKLDVLVLATSYIAHL) folds into the bHLH domain.

As to quaternary structure, forms inactive heterodimeric complex with TCF3. Highly expressed in the uterus (predominantly in myometrium), ovary, and testis. Expression in the uterus is higher in the diestrus phase than in the estrus phase and reaches a maximum at 7.5 dpc. Expression declines towards the time of delivery and returns to the non-pregnant level 4 days after delivery. Low expression seen in lung, heart, intestine, and spleen.

The protein resides in the nucleus. Its function is as follows. Inhibits E-box-mediated binding and transactivation of bHLH factors. Inhibitory effect is similar to that of ID proteins. Inhibits the formation of TCF3 and MYOD1 homodimers and heterodimers. Lacks DNA binding activity. May be involved in the regulation or modulation of smooth muscle contraction of the uterus during pregnancy and particularly around the time of delivery. Seems to play a role in the inhibition of myogenesis. This is Transcription factor 23 (Tcf23) from Mus musculus (Mouse).